Here is an 88-residue protein sequence, read N- to C-terminus: Beta-insect excitatory toxin LqhIT1b (88 aa).

Residues 1–18 (MKFFLLFLVVLPIMGVLG) form the signal peptide. In terms of domain architecture, LCN-type CS-alpha/beta spans 20 to 83 (KNGYAVDSKG…ISDTTKKYCD (64 aa)). 4 cysteine pairs are disulfide-bonded: cysteine 34/cysteine 55, cysteine 40/cysteine 60, cysteine 44/cysteine 62, and cysteine 56/cysteine 82.

It belongs to the long (4 C-C) scorpion toxin superfamily. Sodium channel inhibitor family. Beta subfamily. Expressed by the venom gland.

Its subcellular location is the secreted. Its function is as follows. Excitatory insect toxins induce a spastic paralysis. They bind voltage-independently at site-4 of sodium channels (Nav) and shift the voltage of activation toward more negative potentials thereby affecting sodium channel activation and promoting spontaneous and repetitive firing. The protein is Beta-insect excitatory toxin LqhIT1b of Leiurus hebraeus (Hebrew deathstalker scorpion).